We begin with the raw amino-acid sequence, 226 residues long: Clarin-3 (226 aa).

Residues 8 to 28 (LMFLSSFFTSLGSFIVICSIL) traverse the membrane as a helical segment. The N-linked (GlcNAc...) asparagine glycan is linked to Asn83. A run of 3 helical transmembrane segments spans residues 92-112 (VTIL…GFTF), 129-149 (VYTW…LFVA), and 181-201 (FWLI…IIFY).

It belongs to the clarin family.

It localises to the membrane. This chain is Clarin-3 (CLRN3), found in Homo sapiens (Human).